The primary structure comprises 177 residues: Bifunctional protein PyrR (177 aa).

The PRPP-binding motif lies at 99-111 (VVLVDDVIYKGRT).

It belongs to the purine/pyrimidine phosphoribosyltransferase family. PyrR subfamily.

The catalysed reaction is UMP + diphosphate = 5-phospho-alpha-D-ribose 1-diphosphate + uracil. Its function is as follows. Regulates the transcription of the pyrimidine nucleotide (pyr) operon in response to exogenous pyrimidines. Also displays a weak uracil phosphoribosyltransferase activity which is not physiologically significant. The sequence is that of Bifunctional protein PyrR from Gloeothece citriformis (strain PCC 7424) (Cyanothece sp. (strain PCC 7424)).